Consider the following 87-residue polypeptide: Large ribosomal subunit protein bL27 (87 aa).

Positions 1-20 (MARKRGGSGSKNGRDSNPKY) are disordered.

It belongs to the bacterial ribosomal protein bL27 family.

In Treponema pallidum (strain Nichols), this protein is Large ribosomal subunit protein bL27 (rpmA).